Consider the following 65-residue polypeptide: MPKMKTNRGAAKRFKKTGSGRIKRGKAFTSHILTKKSTKRKRSLRQADLVSSADVKNIKKILPYM.

Residues 1-29 form a disordered region; sequence MPKMKTNRGAAKRFKKTGSGRIKRGKAFT. A compositionally biased stretch (basic residues) spans 10–26; sequence AAKRFKKTGSGRIKRGK.

Belongs to the bacterial ribosomal protein bL35 family.

In Desulfotalea psychrophila (strain LSv54 / DSM 12343), this protein is Large ribosomal subunit protein bL35.